Reading from the N-terminus, the 169-residue chain is Large ribosomal subunit protein uL10 (169 aa).

Belongs to the universal ribosomal protein uL10 family. In terms of assembly, part of the ribosomal stalk of the 50S ribosomal subunit. The N-terminus interacts with L11 and the large rRNA to form the base of the stalk. The C-terminus forms an elongated spine to which L12 dimers bind in a sequential fashion forming a multimeric L10(L12)X complex.

In terms of biological role, forms part of the ribosomal stalk, playing a central role in the interaction of the ribosome with GTP-bound translation factors. The chain is Large ribosomal subunit protein uL10 from Rickettsia africae (strain ESF-5).